We begin with the raw amino-acid sequence, 475 residues long: Protein nucleotidyltransferase YdiU (475 aa).

Residues Gly-82, Gly-84, Arg-85, Lys-105, Asp-117, Gly-118, Arg-168, and Arg-175 each contribute to the ATP site. The Proton acceptor role is filled by Asp-240. Asn-241 and Asp-250 together coordinate Mg(2+). Asp-250 serves as a coordination point for ATP.

This sequence belongs to the SELO family. Mg(2+) serves as cofactor. Mn(2+) is required as a cofactor.

It catalyses the reaction L-seryl-[protein] + ATP = 3-O-(5'-adenylyl)-L-seryl-[protein] + diphosphate. It carries out the reaction L-threonyl-[protein] + ATP = 3-O-(5'-adenylyl)-L-threonyl-[protein] + diphosphate. The enzyme catalyses L-tyrosyl-[protein] + ATP = O-(5'-adenylyl)-L-tyrosyl-[protein] + diphosphate. The catalysed reaction is L-histidyl-[protein] + UTP = N(tele)-(5'-uridylyl)-L-histidyl-[protein] + diphosphate. It catalyses the reaction L-seryl-[protein] + UTP = O-(5'-uridylyl)-L-seryl-[protein] + diphosphate. It carries out the reaction L-tyrosyl-[protein] + UTP = O-(5'-uridylyl)-L-tyrosyl-[protein] + diphosphate. In terms of biological role, nucleotidyltransferase involved in the post-translational modification of proteins. It can catalyze the addition of adenosine monophosphate (AMP) or uridine monophosphate (UMP) to a protein, resulting in modifications known as AMPylation and UMPylation. This chain is Protein nucleotidyltransferase YdiU, found in Aeromonas hydrophila subsp. hydrophila (strain ATCC 7966 / DSM 30187 / BCRC 13018 / CCUG 14551 / JCM 1027 / KCTC 2358 / NCIMB 9240 / NCTC 8049).